Reading from the N-terminus, the 396-residue chain is Tryptophan synthase beta chain (396 aa).

Lys-86 is subject to N6-(pyridoxal phosphate)lysine.

Belongs to the TrpB family. In terms of assembly, tetramer of two alpha and two beta chains. Pyridoxal 5'-phosphate is required as a cofactor.

The catalysed reaction is (1S,2R)-1-C-(indol-3-yl)glycerol 3-phosphate + L-serine = D-glyceraldehyde 3-phosphate + L-tryptophan + H2O. It participates in amino-acid biosynthesis; L-tryptophan biosynthesis; L-tryptophan from chorismate: step 5/5. The beta subunit is responsible for the synthesis of L-tryptophan from indole and L-serine. The sequence is that of Tryptophan synthase beta chain from Vibrio campbellii (strain ATCC BAA-1116).